We begin with the raw amino-acid sequence, 112 residues long: Small ribosomal subunit protein bS6 (112 aa).

Belongs to the bacterial ribosomal protein bS6 family.

Binds together with bS18 to 16S ribosomal RNA. In Legionella pneumophila (strain Paris), this protein is Small ribosomal subunit protein bS6.